The primary structure comprises 519 residues: Maturase K (519 aa).

This sequence belongs to the intron maturase 2 family. MatK subfamily.

It localises to the plastid. The protein localises to the chloroplast. In terms of biological role, usually encoded in the trnK tRNA gene intron. Probably assists in splicing its own and other chloroplast group II introns. This chain is Maturase K, found in Dioscorea elephantipes (Elephant's foot yam).